Consider the following 499-residue polypeptide: MKLLEQIFEIAKKEPDLIVLAEREQKFTYRQLFAAVSHISEQINERNLNQRPILIFGKNDFITLAAMLATNLRGHAYIPVDAHTPFERTEMIKSAAKPAAVLTTVELSADFEALFTDRISLELTDQILTDKLPALDFSKAVSGNDSNYIIYTSGTTGVPKGVEVSHDNLVTFTNWMNNDFMKIENNQILSQALYSFDLSIFSLYPSLTTGGTLISLSRDETTNFKLLFERLNKTVINTWISTPSFVDICLLDPSFTEKEHPQLVQFILCGEELTKKTAEKLLTAFPSANIYNTYGPTEATGAISSVKITKELLTENDRVPIGFAKPGVDLKIMDKEIIIVGDSVAKGYFENPEKTEQAFFTVDGKPAYHTGDAGSISADGMLRYQGRIDFQVKFNGFRIELQDIEANIQNLKEIEKAVVLPKTNDQHKVTALIAYLETEKTFEDRAAERAFTKELKAELSKTIMDYMMPTKFVYLKKFPLNQNGKVDRKALAQKERGDN.

T152 to S153 provides a ligand contact to ATP. Position 197 (D197) interacts with D-alanine. Residues N292 to T297, D372, Y384 to R387, and K485 contribute to the ATP site. Residue K485 coordinates D-alanine.

The protein belongs to the ATP-dependent AMP-binding enzyme family. DltA subfamily.

The protein localises to the cytoplasm. The catalysed reaction is holo-[D-alanyl-carrier protein] + D-alanine + ATP = D-alanyl-[D-alanyl-carrier protein] + AMP + diphosphate. The protein operates within cell wall biogenesis; lipoteichoic acid biosynthesis. Its function is as follows. Catalyzes the first step in the D-alanylation of lipoteichoic acid (LTA), the activation of D-alanine and its transfer onto the D-alanyl carrier protein (Dcp) DltC. In an ATP-dependent two-step reaction, forms a high energy D-alanyl-AMP intermediate, followed by transfer of the D-alanyl residue as a thiol ester to the phosphopantheinyl prosthetic group of the Dcp. D-alanylation of LTA plays an important role in modulating the properties of the cell wall in Gram-positive bacteria, influencing the net charge of the cell wall. The protein is D-alanine--D-alanyl carrier protein ligase of Lactococcus lactis subsp. lactis (strain IL1403) (Streptococcus lactis).